Reading from the N-terminus, the 126-residue chain is Small ribosomal subunit protein uS12 (126 aa).

Residues 1-28 (MPTINQLVRKGRRKVRTKSKSPALDGNP) form a disordered region. Basic residues predominate over residues 9-19 (RKGRRKVRTKS). At aspartate 89 the chain carries 3-methylthioaspartic acid. The interval 106–126 (GVEKRRRSRSKYGVKRPKAAK) is disordered. Basic residues predominate over residues 109 to 126 (KRRRSRSKYGVKRPKAAK).

This sequence belongs to the universal ribosomal protein uS12 family. Part of the 30S ribosomal subunit. Contacts proteins S8 and S17. May interact with IF1 in the 30S initiation complex.

In terms of biological role, with S4 and S5 plays an important role in translational accuracy. Functionally, interacts with and stabilizes bases of the 16S rRNA that are involved in tRNA selection in the A site and with the mRNA backbone. Located at the interface of the 30S and 50S subunits, it traverses the body of the 30S subunit contacting proteins on the other side and probably holding the rRNA structure together. The combined cluster of proteins S8, S12 and S17 appears to hold together the shoulder and platform of the 30S subunit. This Opitutus terrae (strain DSM 11246 / JCM 15787 / PB90-1) protein is Small ribosomal subunit protein uS12.